Consider the following 557-residue polypeptide: Membrane protein insertase YidC (557 aa).

Transmembrane regions (helical) follow at residues 371–391, 437–457, and 515–535; these read WGWS…PLSA, LGGC…YWVL, and PIVF…YWVV.

It belongs to the OXA1/ALB3/YidC family. Type 1 subfamily. As to quaternary structure, interacts with the Sec translocase complex via SecD. Specifically interacts with transmembrane segments of nascent integral membrane proteins during membrane integration.

The protein resides in the cell inner membrane. Required for the insertion and/or proper folding and/or complex formation of integral membrane proteins into the membrane. Involved in integration of membrane proteins that insert both dependently and independently of the Sec translocase complex, as well as at least some lipoproteins. Aids folding of multispanning membrane proteins. This is Membrane protein insertase YidC from Polynucleobacter necessarius subsp. necessarius (strain STIR1).